A 203-amino-acid chain; its full sequence is Probable metallo-hydrolase MJ0296 (203 aa).

7 residues coordinate Zn(2+): His86, His88, Asp90, His91, His135, Asp152, and His193.

It belongs to the metallo-beta-lactamase superfamily. It depends on Zn(2+) as a cofactor.

This Methanocaldococcus jannaschii (strain ATCC 43067 / DSM 2661 / JAL-1 / JCM 10045 / NBRC 100440) (Methanococcus jannaschii) protein is Probable metallo-hydrolase MJ0296.